The sequence spans 135 residues: MKKLTFSFISPERPIVQNQEADFVALPAFEGEMGVLPGHVNSVVILMPGFVRFKNNGEEKEFAIIDGFAEVFKDHIDVFASEASLSEEKQSEEQKQRLERAKKALSSQDADIDIELAEIQLKTQILKMKMKKRKM.

The disordered stretch occupies residues 84–107 (SLSEEKQSEEQKQRLERAKKALSS). Basic and acidic residues predominate over residues 86–102 (SEEKQSEEQKQRLERAK).

It belongs to the ATPase epsilon chain family. In terms of assembly, F-type ATPases have 2 components, CF(1) - the catalytic core - and CF(0) - the membrane proton channel. CF(1) has five subunits: alpha(3), beta(3), gamma(1), delta(1), epsilon(1). CF(0) has three main subunits: a, b and c.

It is found in the cell membrane. Functionally, produces ATP from ADP in the presence of a proton gradient across the membrane. This is ATP synthase epsilon chain from Elusimicrobium minutum (strain Pei191).